The primary structure comprises 165 residues: Probable calcium-binding protein CML18 (165 aa).

EF-hand domains follow at residues 16–51, 52–87, 90–125, and 126–161; these read EQLA…LGLK, PSQD…DLVK, YTDD…LGHA, and LTAE…AAFD. The Ca(2+) site is built by aspartate 29, asparagine 31, aspartate 33, serine 35, glutamate 40, aspartate 65, asparagine 67, asparagine 69, glutamate 76, aspartate 103, aspartate 105, asparagine 107, tyrosine 109, glutamate 114, aspartate 139, aspartate 141, aspartate 143, cysteine 145, and glutamate 150.

As to quaternary structure, calcium and pH-dependent interaction with NHX1 (increases when pH decreases, better at pH 5.5 than at pH 7.5). Also interacts with the CPB protein At2g18750.

Its subcellular location is the vacuole. Its function is as follows. Potential calcium sensor that modulates ion selectivity of NHX1. This chain is Probable calcium-binding protein CML18 (CML18), found in Arabidopsis thaliana (Mouse-ear cress).